The following is a 218-amino-acid chain: Pyridoxine/pyridoxamine 5'-phosphate oxidase (218 aa).

Substrate contacts are provided by residues 14 to 17 (RREY) and lysine 72. FMN contacts are provided by residues 67–72 (RIVLLK), 82–83 (YT), arginine 88, lysine 89, and glutamine 111. Positions 129, 133, and 137 each coordinate substrate. Residues 146–147 (QS) and tryptophan 191 each bind FMN. 197–199 (RLH) contributes to the substrate binding site. Residue arginine 201 participates in FMN binding.

It belongs to the pyridoxamine 5'-phosphate oxidase family. As to quaternary structure, homodimer. The cofactor is FMN.

It carries out the reaction pyridoxamine 5'-phosphate + O2 + H2O = pyridoxal 5'-phosphate + H2O2 + NH4(+). The catalysed reaction is pyridoxine 5'-phosphate + O2 = pyridoxal 5'-phosphate + H2O2. It functions in the pathway cofactor metabolism; pyridoxal 5'-phosphate salvage; pyridoxal 5'-phosphate from pyridoxamine 5'-phosphate: step 1/1. Its pathway is cofactor metabolism; pyridoxal 5'-phosphate salvage; pyridoxal 5'-phosphate from pyridoxine 5'-phosphate: step 1/1. Catalyzes the oxidation of either pyridoxine 5'-phosphate (PNP) or pyridoxamine 5'-phosphate (PMP) into pyridoxal 5'-phosphate (PLP). The polypeptide is Pyridoxine/pyridoxamine 5'-phosphate oxidase (Klebsiella pneumoniae subsp. pneumoniae (strain ATCC 700721 / MGH 78578)).